The sequence spans 261 residues: NAD(P)H-quinone oxidoreductase subunit K, chloroplastic (261 aa).

Residues Cys64, Cys65, Cys129, and Cys160 each contribute to the [4Fe-4S] cluster site.

Belongs to the complex I 20 kDa subunit family. In terms of assembly, NDH is composed of at least 16 different subunits, 5 of which are encoded in the nucleus. [4Fe-4S] cluster serves as cofactor.

It localises to the plastid. The protein localises to the chloroplast thylakoid membrane. It carries out the reaction a plastoquinone + NADH + (n+1) H(+)(in) = a plastoquinol + NAD(+) + n H(+)(out). The catalysed reaction is a plastoquinone + NADPH + (n+1) H(+)(in) = a plastoquinol + NADP(+) + n H(+)(out). In terms of biological role, NDH shuttles electrons from NAD(P)H:plastoquinone, via FMN and iron-sulfur (Fe-S) centers, to quinones in the photosynthetic chain and possibly in a chloroplast respiratory chain. The immediate electron acceptor for the enzyme in this species is believed to be plastoquinone. Couples the redox reaction to proton translocation, and thus conserves the redox energy in a proton gradient. In Physcomitrium patens (Spreading-leaved earth moss), this protein is NAD(P)H-quinone oxidoreductase subunit K, chloroplastic.